Consider the following 228-residue polypeptide: Probable septum site-determining protein MinC (228 aa).

Belongs to the MinC family. Interacts with MinD and FtsZ.

Its function is as follows. Cell division inhibitor that blocks the formation of polar Z ring septums. Rapidly oscillates between the poles of the cell to destabilize FtsZ filaments that have formed before they mature into polar Z rings. Prevents FtsZ polymerization. This is Probable septum site-determining protein MinC from Bacillus cereus (strain B4264).